Here is a 396-residue protein sequence, read N- to C-terminus: Elongation factor Tu (396 aa).

The tr-type G domain occupies 10 to 206 (KPHVNIGTIG…AVDESVPDPV (197 aa)). Positions 19 to 26 (GHVDHGKT) are G1. 19–26 (GHVDHGKT) is a GTP binding site. T26 contacts Mg(2+). Positions 62–66 (GITIN) are G2. The tract at residues 83–86 (DAPG) is G3. GTP-binding positions include 83 to 87 (DAPGH) and 138 to 141 (NKSD). The tract at residues 138 to 141 (NKSD) is G4. The G5 stretch occupies residues 176-178 (SGL).

It belongs to the TRAFAC class translation factor GTPase superfamily. Classic translation factor GTPase family. EF-Tu/EF-1A subfamily. In terms of assembly, monomer.

It is found in the cytoplasm. It carries out the reaction GTP + H2O = GDP + phosphate + H(+). Functionally, GTP hydrolase that promotes the GTP-dependent binding of aminoacyl-tRNA to the A-site of ribosomes during protein biosynthesis. In Pseudarthrobacter chlorophenolicus (strain ATCC 700700 / DSM 12829 / CIP 107037 / JCM 12360 / KCTC 9906 / NCIMB 13794 / A6) (Arthrobacter chlorophenolicus), this protein is Elongation factor Tu.